Reading from the N-terminus, the 871-residue chain is Alanine--tRNA ligase (871 aa).

Residues His-561, His-565, Cys-665, and His-669 each contribute to the Zn(2+) site.

The protein belongs to the class-II aminoacyl-tRNA synthetase family. Zn(2+) is required as a cofactor.

It localises to the cytoplasm. The catalysed reaction is tRNA(Ala) + L-alanine + ATP = L-alanyl-tRNA(Ala) + AMP + diphosphate. Catalyzes the attachment of alanine to tRNA(Ala) in a two-step reaction: alanine is first activated by ATP to form Ala-AMP and then transferred to the acceptor end of tRNA(Ala). Also edits incorrectly charged Ser-tRNA(Ala) and Gly-tRNA(Ala) via its editing domain. The protein is Alanine--tRNA ligase of Dehalococcoides mccartyi (strain ATCC BAA-2266 / KCTC 15142 / 195) (Dehalococcoides ethenogenes (strain 195)).